Here is a 417-residue protein sequence, read N- to C-terminus: Phosphoglycerate kinase, cytosolic (417 aa).

(2R)-3-phosphoglycerate contacts are provided by Val23, Asp24, Phe25, Asn26, Arg39, Ser61, His62, Gly64, Arg65, Arg132, His168, and Arg169. ADP contacts are provided by Gly214 and Ala215. Gly214 lines the CDP pocket. The AMP site is built by Ala215 and Lys216. Position 215 (Ala215) interacts with ATP. Ala215 lines the Mg(2+) pocket. Residue Lys216 coordinates (2R)-3-phosphoglycerate. Asp219 serves as a coordination point for CDP. Residue Asp219 participates in Mg(2+) binding. Positions 220 and 238 each coordinate ADP. Lys220 is a binding site for AMP. Lys220 contacts ATP. A CDP-binding site is contributed by Gly238. AMP is bound by residues Ala239 and Ala311. Residues Ala239 and Ala311 each contribute to the ATP site. ADP contacts are provided by Ala311 and Asn335. Residues Gly336 and Phe341 each coordinate CDP. Positions 341, 342, 374, and 375 each coordinate ADP. Position 342 (Glu342) interacts with AMP. The ATP site is built by Glu342, Asp374, and Thr375. A Mg(2+)-binding site is contributed by Asp374.

This sequence belongs to the phosphoglycerate kinase family. As to quaternary structure, monomer. Mg(2+) is required as a cofactor.

The protein resides in the cytoplasm. The catalysed reaction is (2R)-3-phosphoglycerate + ATP = (2R)-3-phospho-glyceroyl phosphate + ADP. The protein operates within carbohydrate degradation; glycolysis; pyruvate from D-glyceraldehyde 3-phosphate: step 2/5. The sequence is that of Phosphoglycerate kinase, cytosolic (PGKB) from Crithidia fasciculata.